The chain runs to 375 residues: Protein SSUH2 homolog (375 aa).

As to expression, expressed in enterocytes of small and large intestinal mucosa (at protein level). Expressed in chromaffine and interstitial cells. Expressed in peripheral blood and gingival cells.

Its subcellular location is the cytoplasm. The protein resides in the nucleus. Functionally, plays a role in odontogenesis. This Homo sapiens (Human) protein is Protein SSUH2 homolog.